The chain runs to 498 residues: Diacylglycerol O-acyltransferase 1 (498 aa).

The segment at 1–66 (MGDRGGAGSS…AHTRDKDGRT (66 aa)) is disordered. The Cytoplasmic portion of the chain corresponds to 1–92 (MGDRGGAGSS…SLFSSDSGFS (92 aa)). The involved in homomerization stretch occupies residues 1–100 (MGDRGGAGSS…FSNYRGILNW (100 aa)). A Phosphoserine modification is found at Ser20. A helical membrane pass occupies residues 93 to 127 (NYRGILNWCVVMLILSNARLFLENLIKYGILVDPI). Over 128–139 (QVVSLFLKDPYS) the chain is Lumenal. An extracellular loop 1 (EL1) region spans residues 128 to 139 (QVVSLFLKDPYS). Residues 140–165 (WPAPCVIIASNIFVVAAFQIEKRLAV) form a helical membrane-spanning segment. Residues 140 to 498 (WPAPCVIIAS…VLNYDAPVGV (359 aa)) form an MBOAT fold region. Topologically, residues 166-170 (GALTE) are cytoplasmic. The helical transmembrane segment at 171-193 (QMGLLLHVVNLATIICFPAAVAL) threads the bilayer. Topologically, residues 194 to 200 (LVESITP) are lumenal. A helical membrane pass occupies residues 201–232 (VGSVFALASYSIMFLKLYSYRDVNLWCRQRRV). Topologically, residues 233–284 (KAKAVSTGKKVSGAAAQQAVSYPDNLTYRDLYYFIFAPTLCYELNFPRSPRI) are cytoplasmic. Residues 235–287 (KAVSTGKKVSGAAAQQAVSYPDNLTYRDLYYFIFAPTLCYELNFPRSPRIRKR) form an intracellular loop 1 (IL1) region. A helical transmembrane segment spans residues 285-319 (RKRFLLRRVLEMLFFTQLQVGLIQQWMVPTIQNSM). Residues 320 to 326 (KPFKDMD) are Lumenal-facing. Residues 327–364 (YSRIIERLLKLAVPNHLIWLIFFYWFFHSCLNAVAELL) form a helical membrane-spanning segment. Topologically, residues 365–410 (QFGDREFYRDWWNAESVTYFWQNWNIPVHKWCIRHFYKPMLRHGSS) are cytoplasmic. Positions 365 to 410 (QFGDREFYRDWWNAESVTYFWQNWNIPVHKWCIRHFYKPMLRHGSS) are intracellular loop 2 (IL2). Residues 371–377 (FYRDWWN) carry the FYXDWWN motif motif. An acyl-CoA-binding positions include 385-393 (WQNWNIPVH), Tyr401, and Arg415. The segment at 391 to 405 (PVHKWCIRHFYKPML) is amphipathic helix (AH). Residues 411 to 431 (KWVARTGVFLTSAFFHEYLVS) traverse the membrane as a helical segment. His426 is a catalytic residue. Topologically, residues 432 to 439 (VPLRMFRL) are lumenal. The helical transmembrane segment at 440–458 (WAFTAMMAQVPLAWIVGRF) threads the bilayer. Residues 459–460 (FQ) are Cytoplasmic-facing. The chain crosses the membrane as a helical span at residues 461–492 (GNYGNAAVWVTLIIGQPVAVLMYVHDYYVLNY). Position 488 (Tyr488) interacts with an acyl-CoA. Topologically, residues 493-498 (DAPVGV) are lumenal.

Belongs to the membrane-bound acyltransferase family. Sterol o-acyltransferase subfamily. In terms of assembly, homodimer or homotetramer; both forms have similar enzymatic activities.

The protein localises to the endoplasmic reticulum membrane. The catalysed reaction is an acyl-CoA + a 1,2-diacyl-sn-glycerol = a triacyl-sn-glycerol + CoA. The enzyme catalyses all-trans-retinol + an acyl-CoA = an all-trans-retinyl ester + CoA. It carries out the reaction 1-octadecanoyl-2-(5Z,8Z,11Z,14Z-eicosatetraenoyl)-sn-glycerol + (9Z)-octadecenoyl-CoA = 1-octadecanoyl-2-(5Z,8Z,11Z,14Z)-eicosatetraenoyl-3-(9Z)-octadecenoyl-sn-glycerol + CoA. It catalyses the reaction hexadecane-1,2-diol + 2 hexadecanoyl-CoA = 1,2-O,O-dihexadecanoyl-1,2-hexadecanediol + 2 CoA. The catalysed reaction is hexadecane-1,2-diol + hexadecanoyl-CoA = 2-hydroxyhexadecyl hexadecanoate + CoA. The enzyme catalyses 2-(9Z-octadecenoyl)-glycerol + hexadecanoyl-CoA = 1-hexadecanoyl-2-(9Z-octadecenoyl)-sn-glycerol + CoA. It carries out the reaction 1,2-di-(9Z-octadecenoyl)-sn-glycerol + hexadecanoyl-CoA = 1,2-di-(9Z)-octadecenoyl-3-hexadecanoyl-sn-glycerol + CoA. It catalyses the reaction hexadecan-1-ol + hexadecanoyl-CoA = hexadecanyl hexadecanoate + CoA. The catalysed reaction is all-trans-retinol + hexadecanoyl-CoA = all-trans-retinyl hexadecanoate + CoA. The enzyme catalyses 13-cis-retinol + hexadecanoyl-CoA = 13-cis-retinyl hexadecanoate + CoA. It carries out the reaction 1,2-di-(9Z-octadecenoyl)-sn-glycerol + (9Z)-octadecenoyl-CoA = 1,2,3-tri-(9Z-octadecenoyl)-glycerol + CoA. It catalyses the reaction 1,3-di-(9Z-octadecenoyl)-glycerol + (9Z)-octadecenoyl-CoA = 1,2,3-tri-(9Z-octadecenoyl)-glycerol + CoA. The catalysed reaction is 2,3-di-(9Z)-octadecenoyl-sn-glycerol + (9Z)-octadecenoyl-CoA = 1,2,3-tri-(9Z-octadecenoyl)-glycerol + CoA. The enzyme catalyses 1-O-(9Z-octadecenyl)-glycerol + (9Z)-octadecenoyl-CoA = 1-O-(9Z-octadecyl)-3-(9Z-octadecenoyl)-glycerol + CoA. It carries out the reaction 1-(9Z-octadecenoyl)-glycerol + (9Z)-octadecenoyl-CoA = 1,2-di-(9Z-octadecenoyl)-glycerol + CoA. It catalyses the reaction 2-(9Z-octadecenoyl)-glycerol + (9Z)-octadecenoyl-CoA = 1,2-di-(9Z-octadecenoyl)-sn-glycerol + CoA. The catalysed reaction is 1-O-(9Z-octadecyl)-3-(9Z-octadecenoyl)-glycerol + (9Z)-octadecenoyl-CoA = 1-O-(9Z-octadecenyl)-2,3-di-(9Z-octadecenoyl)glycerol + CoA. The enzyme catalyses 1,2-di-(9Z-octadecenoyl)-glycerol + (9Z)-octadecenoate + H(+) = 1,2,3-tri-(9Z-octadecenoyl)-glycerol + H2O. The protein operates within lipid metabolism; glycerolipid metabolism. Catalyzes the terminal and only committed step in triacylglycerol synthesis by using diacylglycerol and fatty acyl CoA as substrates. Highly expressed in epithelial cells of the small intestine and its activity is essential for the absorption of dietary fats. In liver, plays a role in esterifying exogenous fatty acids to glycerol, and is required to synthesize fat for storage. Also present in female mammary glands, where it produces fat in the milk. May be involved in VLDL (very low density lipoprotein) assembly. In contrast to DGAT2 it is not essential for survival. Functions as the major acyl-CoA retinol acyltransferase (ARAT) in the skin, where it acts to maintain retinoid homeostasis and prevent retinoid toxicity leading to skin and hair disorders. Exhibits additional acyltransferase activities, includin acyl CoA:monoacylglycerol acyltransferase (MGAT), wax monoester and wax diester synthases. Also able to use 1-monoalkylglycerol (1-MAkG) as an acyl acceptor for the synthesis of monoalkyl-monoacylglycerol (MAMAG). The polypeptide is Diacylglycerol O-acyltransferase 1 (Mus musculus (Mouse)).